The primary structure comprises 164 residues: Large ribosomal subunit protein bL19 (164 aa).

Residues 144–164 form a disordered region; it reads EAEKQTEVQAEPKIEKSEEKK.

The protein belongs to the bacterial ribosomal protein bL19 family.

Its function is as follows. This protein is located at the 30S-50S ribosomal subunit interface and may play a role in the structure and function of the aminoacyl-tRNA binding site. The chain is Large ribosomal subunit protein bL19 from Pelagibacter ubique (strain HTCC1062).